We begin with the raw amino-acid sequence, 242 residues long: Small ribosomal subunit protein uS2 (242 aa).

It belongs to the universal ribosomal protein uS2 family.

This is Small ribosomal subunit protein uS2 from Neisseria meningitidis serogroup C (strain 053442).